The primary structure comprises 437 residues: Arginine biosynthesis bifunctional protein ArgJ, mitochondrial (437 aa).

Residues Thr173, Lys200, Thr211, Glu297, Asn432, and Ser437 each coordinate substrate. The active-site Nucleophile is Thr211.

Belongs to the ArgJ family. Heterodimer of an alpha and a beta chain. The alpha and beta chains are autoproteolytically processed from a single precursor protein within the mitochondrion.

The protein resides in the mitochondrion matrix. It catalyses the reaction N(2)-acetyl-L-ornithine + L-glutamate = N-acetyl-L-glutamate + L-ornithine. It carries out the reaction L-glutamate + acetyl-CoA = N-acetyl-L-glutamate + CoA + H(+). The protein operates within amino-acid biosynthesis; L-arginine biosynthesis; L-ornithine and N-acetyl-L-glutamate from L-glutamate and N(2)-acetyl-L-ornithine (cyclic): step 1/1. It functions in the pathway amino-acid biosynthesis; L-arginine biosynthesis; N(2)-acetyl-L-ornithine from L-glutamate: step 1/4. Its function is as follows. Catalyzes two activities which are involved in the cyclic version of arginine biosynthesis: the synthesis of acetylglutamate from glutamate and acetyl-CoA, and of ornithine by transacetylation between acetylornithine and glutamate. The polypeptide is Arginine biosynthesis bifunctional protein ArgJ, mitochondrial (Zygosaccharomyces rouxii (strain ATCC 2623 / CBS 732 / NBRC 1130 / NCYC 568 / NRRL Y-229)).